A 623-amino-acid chain; its full sequence is Dynein axonemal intermediate chain 2 (623 aa).

5 WD repeats span residues 214 to 254, 261 to 302, 362 to 401, 405 to 445, and 450 to 489; these read KPLS…LVAE, SHRD…EPIE, GHHGPIYALQRNPFYPKNFLTVGDWTARIWSEDSRESSIM, YHMA…CDPA, and VCDDPLFCLRVQDNGCLIACGSELGTTTLLEVSSSLSTLQ. Residues 565–602 are disordered; that stretch reads AEALKKKPKPRKKSSVKVEAEEEVEENVGEEEEAGGII. A compositionally biased stretch (basic residues) spans 570–579; the sequence is KKPKPRKKSS. The span at 584–598 shows a compositional bias: acidic residues; the sequence is AEEEVEENVGEEEEA.

It belongs to the dynein intermediate chain family. In terms of assembly, consists of at least two heavy chains and a number of intermediate and light chains. Interacts with DNAAF2. Interacts with DNAAF6/PIH1D3. Interacts with HEATR2; probably involved in outer arm dynein assembly. Interacts with CFAP53. Predominantly expressed in ovary, testis and lung.

The protein localises to the cytoplasm. The protein resides in the cytoskeleton. It localises to the cilium axoneme. Its subcellular location is the dynein axonemal particle. Functionally, part of the dynein complex of respiratory cilia. This Mus musculus (Mouse) protein is Dynein axonemal intermediate chain 2 (Dnai2).